We begin with the raw amino-acid sequence, 200 residues long: Large ribosomal subunit protein uL4 (200 aa).

A disordered region spans residues 43–71 (RAQKTRAEVSGSGKKPWRQKGTGRARSGD).

Belongs to the universal ribosomal protein uL4 family. As to quaternary structure, part of the 50S ribosomal subunit.

Its function is as follows. One of the primary rRNA binding proteins, this protein initially binds near the 5'-end of the 23S rRNA. It is important during the early stages of 50S assembly. It makes multiple contacts with different domains of the 23S rRNA in the assembled 50S subunit and ribosome. Forms part of the polypeptide exit tunnel. This is Large ribosomal subunit protein uL4 from Aggregatibacter actinomycetemcomitans (Actinobacillus actinomycetemcomitans).